A 53-amino-acid chain; its full sequence is ATP synthase protein 8 (53 aa).

Residues 9–29 (WITSMLMFWISVSILFSTLWW) traverse the membrane as a helical segment.

The protein belongs to the ATPase protein 8 family. As to quaternary structure, F-type ATPases have 2 components, CF(1) - the catalytic core - and CF(0) - the membrane proton channel.

Its subcellular location is the mitochondrion membrane. In terms of biological role, mitochondrial membrane ATP synthase (F(1)F(0) ATP synthase or Complex V) produces ATP from ADP in the presence of a proton gradient across the membrane which is generated by electron transport complexes of the respiratory chain. F-type ATPases consist of two structural domains, F(1) - containing the extramembraneous catalytic core and F(0) - containing the membrane proton channel, linked together by a central stalk and a peripheral stalk. During catalysis, ATP synthesis in the catalytic domain of F(1) is coupled via a rotary mechanism of the central stalk subunits to proton translocation. Part of the complex F(0) domain. Minor subunit located with subunit a in the membrane. This is ATP synthase protein 8 (MT-ATP8) from Lumbricus terrestris (Common earthworm).